We begin with the raw amino-acid sequence, 230 residues long: Complex I assembly factor TMEM126B, mitochondrial (230 aa).

4 helical membrane passes run Leu-70 to Val-92, Tyr-107 to Val-126, Ser-139 to Phe-161, and Ala-196 to Ile-218.

This sequence belongs to the TMEM126 family. In terms of assembly, part of the mitochondrial complex I assembly/MCIA complex that comprises at least the core subunits TMEM126B, NDUFAF1, ECSIT and ACAD9 and complement subunits such as COA1 and TMEM186. Associates with the intermediate 370 kDa subcomplex of incompletely assembled complex I. Interacts with TMEM70.

It localises to the mitochondrion membrane. In terms of biological role, as part of the MCIA complex, involved in the assembly of the mitochondrial complex I. Participates in constructing the membrane arm of complex I. The protein is Complex I assembly factor TMEM126B, mitochondrial of Mus musculus (Mouse).